Reading from the N-terminus, the 644-residue chain is Pentatricopeptide repeat-containing protein At1g12775, mitochondrial (644 aa).

Residues 1–53 (MVRMMIRRLSSQASRFVQPRLLETGTLRIALINCPNELLFCCERGFSTFSDRN) constitute a mitochondrion transit peptide. PPR repeat units lie at residues 87–121 (TVID…GIAH), 122–156 (SIYT…GYEP), 157–191 (DTVI…GHKP), 192–226 (TLIT…GFQP), 227–261 (NEVT…NIKL), 262–296 (DAVK…GFKA), 297–331 (DIIT…KISP), 332–366 (NVVT…GIAP), 367–401 (NTIT…GCDP), 402–436 (DIMT…GVIA), 437–471 (NTVT…RVRP), 472–506 (DIVS…KMEL), 507–541 (DIGI…GVKL), 542–576 (DARA…GHAP), and 577–611 (DELT…GFPA).

This sequence belongs to the PPR family. P subfamily.

It localises to the mitochondrion. The sequence is that of Pentatricopeptide repeat-containing protein At1g12775, mitochondrial from Arabidopsis thaliana (Mouse-ear cress).